Here is a 625-residue protein sequence, read N- to C-terminus: Probable potassium transport system protein Kup (625 aa).

A run of 12 helical transmembrane segments spans residues 10-30, 50-70, 102-122, 142-162, 172-192, 215-235, 250-270, 284-304, 340-360, 369-389, 397-417, and 422-442; these read LAAL…TSPL, LLGV…LKYV, YFPL…DSVI, FDPY…SVQA, FGPI…VNII, FLAF…EALY, WFLV…ALLL, LGAW…IIAS, IYIP…VVGF, AYGI…FFVI, LLLC…LFSA, and LFHG…LMLT.

This sequence belongs to the HAK/KUP transporter (TC 2.A.72) family.

The protein resides in the cell inner membrane. It carries out the reaction K(+)(in) + H(+)(in) = K(+)(out) + H(+)(out). Its function is as follows. Transport of potassium into the cell. Likely operates as a K(+):H(+) symporter. The polypeptide is Probable potassium transport system protein Kup (Janthinobacterium sp. (strain Marseille) (Minibacterium massiliensis)).